A 217-amino-acid polypeptide reads, in one-letter code: Large ribosomal subunit protein uL1 (217 aa).

Belongs to the universal ribosomal protein uL1 family. As to quaternary structure, part of the 50S ribosomal subunit.

In terms of biological role, binds directly to 23S rRNA. Probably involved in E site tRNA release. Its function is as follows. Protein L1 is also a translational repressor protein, it controls the translation of its operon by binding to its mRNA. This is Large ribosomal subunit protein uL1 from Hyperthermus butylicus (strain DSM 5456 / JCM 9403 / PLM1-5).